The following is a 478-amino-acid chain: Cytochrome c-552 (478 aa).

An N-terminal signal peptide occupies residues 1 to 27 (MKKQWTRRSAAAIAMVTTLLLSSHSFA). Heme c is bound at residue histidine 91. Positions 119, 122, and 123 each coordinate heme. The heme c site is built by cysteine 157, cysteine 160, histidine 161, cysteine 206, cysteine 209, and histidine 210. Ca(2+)-binding residues include glutamate 212, tyrosine 213, lysine 258, and glutamine 260. Tyrosine 213 contacts substrate. Residue histidine 261 coordinates substrate. Histidine 272, cysteine 279, cysteine 282, histidine 283, histidine 298, cysteine 311, cysteine 314, histidine 315, and histidine 390 together coordinate heme c.

Belongs to the cytochrome c-552 family. Ca(2+) is required as a cofactor. The cofactor is heme c.

The protein localises to the periplasm. It catalyses the reaction 6 Fe(III)-[cytochrome c] + NH4(+) + 2 H2O = 6 Fe(II)-[cytochrome c] + nitrite + 8 H(+). Its pathway is nitrogen metabolism; nitrate reduction (assimilation). In terms of biological role, catalyzes the reduction of nitrite to ammonia, consuming six electrons in the process. This is Cytochrome c-552 from Aliivibrio salmonicida (strain LFI1238) (Vibrio salmonicida (strain LFI1238)).